The primary structure comprises 200 residues: Small ribosomal subunit protein mS26 (200 aa).

Residues 1-27 constitute a mitochondrion transit peptide; the sequence is MLRALNRLAARPETRPPTPLLLPVRGR. Residues 1–44 are disordered; the sequence is MLRALNRLAARPETRPPTPLLLPVRGRKTRHDPPAKSKVGRVQT. K159 carries the N6-acetyllysine modification.

This sequence belongs to the mitochondrion-specific ribosomal protein mS26 family. As to quaternary structure, component of the mitochondrial ribosome small subunit (28S) which comprises a 12S rRNA and about 30 distinct proteins.

Its subcellular location is the mitochondrion. This chain is Small ribosomal subunit protein mS26 (Mrps26), found in Mus musculus (Mouse).